Reading from the N-terminus, the 315-residue chain is Lipoyl synthase (315 aa).

Cysteine 62, cysteine 67, cysteine 73, cysteine 88, cysteine 92, cysteine 95, and serine 302 together coordinate [4Fe-4S] cluster. Positions 74 to 292 (FNHGTATFMI…KIALKLGFIR (219 aa)) constitute a Radical SAM core domain.

The protein belongs to the radical SAM superfamily. Lipoyl synthase family. The cofactor is [4Fe-4S] cluster.

The protein localises to the cytoplasm. The enzyme catalyses [[Fe-S] cluster scaffold protein carrying a second [4Fe-4S](2+) cluster] + N(6)-octanoyl-L-lysyl-[protein] + 2 oxidized [2Fe-2S]-[ferredoxin] + 2 S-adenosyl-L-methionine + 4 H(+) = [[Fe-S] cluster scaffold protein] + N(6)-[(R)-dihydrolipoyl]-L-lysyl-[protein] + 4 Fe(3+) + 2 hydrogen sulfide + 2 5'-deoxyadenosine + 2 L-methionine + 2 reduced [2Fe-2S]-[ferredoxin]. It functions in the pathway protein modification; protein lipoylation via endogenous pathway; protein N(6)-(lipoyl)lysine from octanoyl-[acyl-carrier-protein]: step 2/2. Functionally, catalyzes the radical-mediated insertion of two sulfur atoms into the C-6 and C-8 positions of the octanoyl moiety bound to the lipoyl domains of lipoate-dependent enzymes, thereby converting the octanoylated domains into lipoylated derivatives. The polypeptide is Lipoyl synthase (Vesicomyosocius okutanii subsp. Calyptogena okutanii (strain HA)).